The following is a 189-amino-acid chain: Ion-translocating oxidoreductase complex subunit B (189 aa).

A hydrophobic region spans residues 1-26 (MSQVIIAIILLGLLALAFGALLGYAA). A 4Fe-4S domain is found at 32 to 90 (EGDPIIDQAEALLPQTQCGQCGYPGCRPYAEAIANGEKINKCPPGGTATMEKLAELMGV). 12 residues coordinate [4Fe-4S] cluster: Cys49, Cys52, Cys57, Cys73, Cys114, Cys117, Cys120, Cys124, Cys144, Cys147, Cys150, and Cys154. 2 consecutive 4Fe-4S ferredoxin-type domains span residues 105 to 134 (KVAF…GTGK) and 135 to 164 (QMHT…MIPV).

Belongs to the 4Fe4S bacterial-type ferredoxin family. RnfB subfamily. The complex is composed of six subunits: RnfA, RnfB, RnfC, RnfD, RnfE and RnfG. Requires [4Fe-4S] cluster as cofactor.

It localises to the cell inner membrane. Functionally, part of a membrane-bound complex that couples electron transfer with translocation of ions across the membrane. This Shewanella loihica (strain ATCC BAA-1088 / PV-4) protein is Ion-translocating oxidoreductase complex subunit B.